A 119-amino-acid chain; its full sequence is Large ribosomal subunit protein bL20 (119 aa).

It belongs to the bacterial ribosomal protein bL20 family.

Its function is as follows. Binds directly to 23S ribosomal RNA and is necessary for the in vitro assembly process of the 50S ribosomal subunit. It is not involved in the protein synthesizing functions of that subunit. The polypeptide is Large ribosomal subunit protein bL20 (Streptococcus gordonii (strain Challis / ATCC 35105 / BCRC 15272 / CH1 / DL1 / V288)).